We begin with the raw amino-acid sequence, 326 residues long: Phospho-N-acetylmuramoyl-pentapeptide-transferase (326 aa).

Helical transmembrane passes span 3–23 (LPTK…PYFI), 51–71 (TPTM…LFWV), 77–97 (ILLL…DDYL), 113–133 (ILIQ…YFTE), 143–163 (GIMI…VVGS), 175–195 (GLAA…AYMT), 199–219 (ISVI…LWFN), 225–245 (IFMG…TSVL), 250–270 (VLFA…VIQV), and 306–326 (IVIK…AFLL).

This sequence belongs to the glycosyltransferase 4 family. MraY subfamily. Mg(2+) serves as cofactor.

It localises to the cell membrane. The catalysed reaction is UDP-N-acetyl-alpha-D-muramoyl-L-alanyl-gamma-D-glutamyl-meso-2,6-diaminopimeloyl-D-alanyl-D-alanine + di-trans,octa-cis-undecaprenyl phosphate = di-trans,octa-cis-undecaprenyl diphospho-N-acetyl-alpha-D-muramoyl-L-alanyl-D-glutamyl-meso-2,6-diaminopimeloyl-D-alanyl-D-alanine + UMP. Its pathway is cell wall biogenesis; peptidoglycan biosynthesis. Its function is as follows. Catalyzes the initial step of the lipid cycle reactions in the biosynthesis of the cell wall peptidoglycan: transfers peptidoglycan precursor phospho-MurNAc-pentapeptide from UDP-MurNAc-pentapeptide onto the lipid carrier undecaprenyl phosphate, yielding undecaprenyl-pyrophosphoryl-MurNAc-pentapeptide, known as lipid I. The sequence is that of Phospho-N-acetylmuramoyl-pentapeptide-transferase from Wolbachia sp. subsp. Brugia malayi (strain TRS).